Consider the following 68-residue polypeptide: Large ribosomal subunit protein uL29 (68 aa).

The protein belongs to the universal ribosomal protein uL29 family.

This chain is Large ribosomal subunit protein uL29 (rpl29), found in Pyrococcus abyssi (strain GE5 / Orsay).